The primary structure comprises 259 residues: Phosphate import ATP-binding protein PstB (259 aa).

The ABC transporter domain maps to 5–248; it reads IDVSGLHVYY…NKIFTKPEKK (244 aa). 37-44 contacts ATP; that stretch reads GSSGCGKS.

It belongs to the ABC transporter superfamily. Phosphate importer (TC 3.A.1.7) family. In terms of assembly, the complex is composed of two ATP-binding proteins (PstB), two transmembrane proteins (PstC and PstA) and a solute-binding protein (PstS).

The protein localises to the cell membrane. The catalysed reaction is phosphate(out) + ATP + H2O = ADP + 2 phosphate(in) + H(+). In terms of biological role, part of the ABC transporter complex PstSACB involved in phosphate import. Responsible for energy coupling to the transport system. The chain is Phosphate import ATP-binding protein PstB from Thermobifida fusca (strain YX).